The following is a 380-amino-acid chain: Putative 8-amino-7-oxononanoate synthase (380 aa).

A substrate-binding site is contributed by R18. Position 106-107 (106-107 (GY)) interacts with pyridoxal 5'-phosphate. H131 serves as a coordination point for substrate. Residues S179, 205–208 (DEAH), and 236–239 (TFGK) each bind pyridoxal 5'-phosphate. K239 bears the N6-(pyridoxal phosphate)lysine mark. T352 contributes to the substrate binding site.

This sequence belongs to the class-II pyridoxal-phosphate-dependent aminotransferase family. BioF subfamily. Homodimer. Pyridoxal 5'-phosphate is required as a cofactor.

It carries out the reaction 6-carboxyhexanoyl-[ACP] + L-alanine + H(+) = (8S)-8-amino-7-oxononanoate + holo-[ACP] + CO2. The protein operates within cofactor biosynthesis; biotin biosynthesis. Catalyzes the decarboxylative condensation of pimeloyl-[acyl-carrier protein] and L-alanine to produce 8-amino-7-oxononanoate (AON), [acyl-carrier protein], and carbon dioxide. In Neisseria meningitidis serogroup C (strain 053442), this protein is Putative 8-amino-7-oxononanoate synthase (bioF).